The sequence spans 100 residues: Pregnancy-associated protein bPAP (100 aa).

Positions 1–40 (DSELAGPRGARGPHGLSGPHGLSGLXGPXGYTGPIGMXGL) are disordered. Residues 13 to 29 (PHGLSGPHGLSGLXGPX) are compositionally biased toward low complexity.

In terms of tissue distribution, detected at high levels in the urine of pregnant females (at protein level) and at far lower levels in the urine of nonpregnant females.

The polypeptide is Pregnancy-associated protein bPAP (Bos taurus (Bovine)).